Here is a 969-residue protein sequence, read N- to C-terminus: Isoleucine--tRNA ligase (969 aa).

The short motif at 68-78 (PYANGNLHMGH) is the 'HIGH' region element. E584 provides a ligand contact to L-isoleucyl-5'-AMP. The 'KMSKS' region signature appears at 625–629 (KMSKS). K628 serves as a coordination point for ATP. Residues C938, C941, C958, and C961 each coordinate Zn(2+).

Belongs to the class-I aminoacyl-tRNA synthetase family. IleS type 1 subfamily. Monomer. Zn(2+) is required as a cofactor.

It is found in the cytoplasm. The enzyme catalyses tRNA(Ile) + L-isoleucine + ATP = L-isoleucyl-tRNA(Ile) + AMP + diphosphate. In terms of biological role, catalyzes the attachment of isoleucine to tRNA(Ile). As IleRS can inadvertently accommodate and process structurally similar amino acids such as valine, to avoid such errors it has two additional distinct tRNA(Ile)-dependent editing activities. One activity is designated as 'pretransfer' editing and involves the hydrolysis of activated Val-AMP. The other activity is designated 'posttransfer' editing and involves deacylation of mischarged Val-tRNA(Ile). This chain is Isoleucine--tRNA ligase, found in Prochlorococcus marinus (strain SARG / CCMP1375 / SS120).